The primary structure comprises 453 residues: Glutamyl-tRNA(Gln) amidotransferase subunit A (453 aa).

Catalysis depends on charge relay system residues K53 and S128. S152 acts as the Acyl-ester intermediate in catalysis.

Belongs to the amidase family. GatA subfamily. Heterotrimer of A, B and C subunits.

It carries out the reaction L-glutamyl-tRNA(Gln) + L-glutamine + ATP + H2O = L-glutaminyl-tRNA(Gln) + L-glutamate + ADP + phosphate + H(+). Its function is as follows. Allows the formation of correctly charged Gln-tRNA(Gln) through the transamidation of misacylated Glu-tRNA(Gln) in organisms which lack glutaminyl-tRNA synthetase. The reaction takes place in the presence of glutamine and ATP through an activated gamma-phospho-Glu-tRNA(Gln). The chain is Glutamyl-tRNA(Gln) amidotransferase subunit A from Helicobacter pylori (strain P12).